Here is a 419-residue protein sequence, read N- to C-terminus: Tyrosine--tRNA ligase (419 aa).

Tyr-42 provides a ligand contact to L-tyrosine. The short motif at 47–56 is the 'HIGH' region element; it reads ATAPSLHVGS. L-tyrosine is bound by residues Tyr-179 and Gln-183. The 'KMSKS' region signature appears at 239–243; that stretch reads KMGKT. Lys-242 lines the ATP pocket. Residues 353 to 418 enclose the S4 RNA-binding domain; sequence VVLAALFADA…GKKKIVLVKP (66 aa).

It belongs to the class-I aminoacyl-tRNA synthetase family. TyrS type 1 subfamily. Homodimer.

The protein localises to the cytoplasm. The catalysed reaction is tRNA(Tyr) + L-tyrosine + ATP = L-tyrosyl-tRNA(Tyr) + AMP + diphosphate + H(+). Its function is as follows. Catalyzes the attachment of tyrosine to tRNA(Tyr) in a two-step reaction: tyrosine is first activated by ATP to form Tyr-AMP and then transferred to the acceptor end of tRNA(Tyr). This is Tyrosine--tRNA ligase from Caulobacter vibrioides (strain ATCC 19089 / CIP 103742 / CB 15) (Caulobacter crescentus).